A 944-amino-acid polypeptide reads, in one-letter code: Protein translocase subunit SecA (944 aa).

ATP-binding positions include Gln-87, 105 to 109 (GEGKT), and Asp-494. The interval 894–944 (HAAAAGDGEEKPRPKQETVVRTQPKVGRNDPCPCGSGKKYKKCHGATEAAV) is disordered. Over residues 901 to 911 (GEEKPRPKQET) the composition is skewed to basic and acidic residues. Cys-925, Cys-927, Cys-936, and His-937 together coordinate Zn(2+).

The protein belongs to the SecA family. In terms of assembly, monomer and homodimer. Part of the essential Sec protein translocation apparatus which comprises SecA, SecYEG and auxiliary proteins SecDF-YajC and YidC. The cofactor is Zn(2+).

The protein localises to the cell inner membrane. The protein resides in the cytoplasm. The catalysed reaction is ATP + H2O + cellular proteinSide 1 = ADP + phosphate + cellular proteinSide 2.. In terms of biological role, part of the Sec protein translocase complex. Interacts with the SecYEG preprotein conducting channel. Has a central role in coupling the hydrolysis of ATP to the transfer of proteins into and across the cell membrane, serving as an ATP-driven molecular motor driving the stepwise translocation of polypeptide chains across the membrane. This Anaeromyxobacter sp. (strain Fw109-5) protein is Protein translocase subunit SecA.